The following is a 1162-amino-acid chain: MKRVREEVYVEPQMRGPTVSSRGETNGRPSTISGGGTTGGLTTVDALTYLKAVKDMFQDNKEKYETFLGVMKDFKAQRVDTNGVIARVKDLFKGYDDLLLGFNTFLPKGYKITLQPEDEKPKKPVDFQVAIEFVNRIKARFGGDDRAYKKFLDILNMYRKETKSINEVYQEVTLLFQDHEDLLGEFVHFLPDFRGSVSVNDPLFQRNTIPRDRNSTFPGMHPKHFEKKIKRSRHDEYTELSDQREDGDENLVAYSAESLANQGQWPGYPKVEDTEGIQIYESNGGHERDPDIGSQKNLLSTNHMAKAINELDLTDCAQCTPSYRRLPDDYPIQIPSYRNSLGEKVLNDHWVSVTSGSEDYSFKHMRKNQYEESLFRCEDDRFELDMLLESVSAAIKRVESLLEKINNNTISIETPICIREHLSELNLRCIERLYGDYGLDVMDFLKKNSHIALPVILTRLKQKQEEWARCRADFRKVWAEVYAKNHHKSLDHRSFYFKQQDSKNLSTKGLVAEIKDISERKHKEDLLRAIAVGTKPSFTPDVEFIYTDTKVHTDLYKLIKYYCEEICATEQSDKVMKLWVTFLEPMFGVPSRSETIETMKDVAKIEDNQEHHDASEAVKENTCDGSMASNLKPLTPPKMPNKENPMIQGSSFAQDLPVNTGESIQQDKLHDVAAITNEDSQPSKLVSTRNDLIMEGVENRSRVSDVSMGGHKVEREEGELSPTESCEQENFEVYKENGLEPVQKLPDNEISNTDREPKEGACGTEAVTRSNALPEDDDNKITQKLSEGDENASKFIVSASKFGGQVSSDEEHKGAESENEAGGMVNSNEGEDGSFFTFSERYLQPVKPLAKHVPGTLQASECDTRNDSRVFYGNDSLYVLFRLHQMLYERIQSAKIHSERKWKAPDSTSTDSYTRFMEALYNLLDGSSDNTKFEDECRAIIGAQSYVLFTLDKLVQKFVKHLHAVAADETDTKLLQLYAYENYRKPGRFFDIVYHENARALLHDQNIYRIEYSSAQTRLGIQLMNSWNDQPEVTAVTVEPGFANYLQNDFLSFVSDEEKPGLFLKRNKAKLSGPGEESLGMSRALEGLNIINEVECKIACSSFKVKYEPHTADLLYRRKQKKATLNPTGPENVKTSDSSELSRKKRISRFHMSLNRRLVALP.

A disordered region spans residues 1 to 37; that stretch reads MKRVREEVYVEPQMRGPTVSSRGETNGRPSTISGGGT. A compositionally biased stretch (polar residues) spans 18–30; that stretch reads TVSSRGETNGRPS. PAH domains are found at residues 28-109 and 123-193; these read RPST…LPKG and KPVD…LPDF. Disordered regions lie at residues 702–727, 743–779, 803–830, and 1121–1143; these read RVSD…ESCE, QKLP…DDDN, GGQV…SNEG, and KKAT…ELSR. Ser-817 bears the Phosphoserine mark. The segment covering 1123–1139 has biased composition (polar residues); that stretch reads ATLNPTGPENVKTSDSS.

Its subcellular location is the nucleus. Acts as a transcriptional repressor. Plays roles in regulating gene expression and genome stability. In Arabidopsis thaliana (Mouse-ear cress), this protein is Paired amphipathic helix protein Sin3-like 5 (SNL5).